We begin with the raw amino-acid sequence, 256 residues long: Type III pantothenate kinase (256 aa).

6-13 (DVGNTNIV) is a binding site for ATP. Substrate is bound at residue 107 to 110 (GADR). Residue Asp-109 is the Proton acceptor of the active site. K(+) is bound at residue Asp-129. Thr-132 serves as a coordination point for ATP. Position 184 (Thr-184) interacts with substrate.

It belongs to the type III pantothenate kinase family. As to quaternary structure, homodimer. Requires NH4(+) as cofactor. K(+) is required as a cofactor.

The protein resides in the cytoplasm. It catalyses the reaction (R)-pantothenate + ATP = (R)-4'-phosphopantothenate + ADP + H(+). Its pathway is cofactor biosynthesis; coenzyme A biosynthesis; CoA from (R)-pantothenate: step 1/5. In terms of biological role, catalyzes the phosphorylation of pantothenate (Pan), the first step in CoA biosynthesis. The chain is Type III pantothenate kinase from Pelotomaculum thermopropionicum (strain DSM 13744 / JCM 10971 / SI).